The sequence spans 315 residues: Ribose-phosphate pyrophosphokinase (315 aa).

ATP-binding positions include 37–39 and 96–97; these read DGE and RQ. Mg(2+)-binding residues include His-131 and Asp-171. Lys-195 is a catalytic residue. Residues Arg-197, Asp-221, and 225–229 each bind D-ribose 5-phosphate; that span reads DTGGT.

Belongs to the ribose-phosphate pyrophosphokinase family. Class I subfamily. As to quaternary structure, homohexamer. Mg(2+) is required as a cofactor.

The protein resides in the cytoplasm. The catalysed reaction is D-ribose 5-phosphate + ATP = 5-phospho-alpha-D-ribose 1-diphosphate + AMP + H(+). The protein operates within metabolic intermediate biosynthesis; 5-phospho-alpha-D-ribose 1-diphosphate biosynthesis; 5-phospho-alpha-D-ribose 1-diphosphate from D-ribose 5-phosphate (route I): step 1/1. In terms of biological role, involved in the biosynthesis of the central metabolite phospho-alpha-D-ribosyl-1-pyrophosphate (PRPP) via the transfer of pyrophosphoryl group from ATP to 1-hydroxyl of ribose-5-phosphate (Rib-5-P). The chain is Ribose-phosphate pyrophosphokinase from Pasteurella multocida (strain Pm70).